We begin with the raw amino-acid sequence, 327 residues long: Acetaldehyde dehydrogenase 5 (327 aa).

15-18 provides a ligand contact to NAD(+); the sequence is SGNI. Cys-133 functions as the Acyl-thioester intermediate in the catalytic mechanism. Residues 164–172 and Asn-297 each bind NAD(+); that span reads SAGPGTRAN.

This sequence belongs to the acetaldehyde dehydrogenase family.

It catalyses the reaction acetaldehyde + NAD(+) + CoA = acetyl-CoA + NADH + H(+). In Rhodococcus jostii (strain RHA1), this protein is Acetaldehyde dehydrogenase 5.